A 195-amino-acid chain; its full sequence is Phosphoheptose isomerase (195 aa).

The SIS domain maps to 35 to 195 (IVSKILQAGN…IVEYNLFKME (161 aa)). A substrate-binding site is contributed by 51 to 53 (NGG). Zn(2+) is bound by residues histidine 60 and glutamate 64. Substrate is bound by residues glutamate 64, 95-96 (ND), 121-123 (STS), serine 126, and glutamine 173. Zn(2+) is bound by residues glutamine 173 and histidine 181.

The protein belongs to the SIS family. GmhA subfamily. Zn(2+) serves as cofactor.

Its subcellular location is the cytoplasm. It carries out the reaction 2 D-sedoheptulose 7-phosphate = D-glycero-alpha-D-manno-heptose 7-phosphate + D-glycero-beta-D-manno-heptose 7-phosphate. It participates in carbohydrate biosynthesis; D-glycero-D-manno-heptose 7-phosphate biosynthesis; D-glycero-alpha-D-manno-heptose 7-phosphate and D-glycero-beta-D-manno-heptose 7-phosphate from sedoheptulose 7-phosphate: step 1/1. Functionally, catalyzes the isomerization of sedoheptulose 7-phosphate in D-glycero-D-manno-heptose 7-phosphate. The protein is Phosphoheptose isomerase of Leptospira interrogans serogroup Icterohaemorrhagiae serovar copenhageni (strain Fiocruz L1-130).